Consider the following 95-residue polypeptide: Ferredoxin-4 (95 aa).

The 94-residue stretch at 2-95 (DKATLTFTDV…LGGAVKVRPA (94 aa)) folds into the 2Fe-2S ferredoxin-type domain. Positions 38, 43, 46, and 81 each coordinate [2Fe-2S] cluster.

It belongs to the 2Fe2S plant-type ferredoxin family. It depends on [2Fe-2S] cluster as a cofactor.

Functionally, ferredoxins are iron-sulfur proteins that transfer electrons in a wide variety of metabolic reactions. This ferredoxin is required for nitrogen fixation. The protein is Ferredoxin-4 (fdxC) of Rhodobacter capsulatus (Rhodopseudomonas capsulata).